The chain runs to 338 residues: Fructose-1,6-bisphosphatase class 1 1 (338 aa).

Mg(2+) is bound by residues Glu-88, Asp-107, Leu-109, and Asp-110. Substrate is bound by residues 110–113 (DGSS) and Asn-196. Residue Glu-268 coordinates Mg(2+).

This sequence belongs to the FBPase class 1 family. Homotetramer. Mg(2+) serves as cofactor.

It is found in the cytoplasm. It catalyses the reaction beta-D-fructose 1,6-bisphosphate + H2O = beta-D-fructose 6-phosphate + phosphate. Its pathway is carbohydrate biosynthesis; Calvin cycle. The sequence is that of Fructose-1,6-bisphosphatase class 1 1 from Bradyrhizobium sp. (strain BTAi1 / ATCC BAA-1182).